A 176-amino-acid chain; its full sequence is Ribosome maturation factor RimM (176 aa).

Positions 99 to 176 (EDEYYWSDLV…RMVVDWERDF (78 aa)) constitute a PRC barrel domain.

It belongs to the RimM family. As to quaternary structure, binds ribosomal protein uS19.

It is found in the cytoplasm. In terms of biological role, an accessory protein needed during the final step in the assembly of 30S ribosomal subunit, possibly for assembly of the head region. Essential for efficient processing of 16S rRNA. May be needed both before and after RbfA during the maturation of 16S rRNA. It has affinity for free ribosomal 30S subunits but not for 70S ribosomes. In Psychrobacter sp. (strain PRwf-1), this protein is Ribosome maturation factor RimM.